The sequence spans 75 residues: Small ribosomal subunit protein bS18 (75 aa).

It belongs to the bacterial ribosomal protein bS18 family. Part of the 30S ribosomal subunit. Forms a tight heterodimer with protein bS6.

Functionally, binds as a heterodimer with protein bS6 to the central domain of the 16S rRNA, where it helps stabilize the platform of the 30S subunit. The protein is Small ribosomal subunit protein bS18 of Acinetobacter baumannii (strain AB307-0294).